Here is a 432-residue protein sequence, read N- to C-terminus: Enolase (432 aa).

Gln-166 is a (2R)-2-phosphoglycerate binding site. The active-site Proton donor is the Glu-208. Mg(2+) is bound by residues Asp-245, Glu-291, and Asp-318. The (2R)-2-phosphoglycerate site is built by Lys-343, Arg-372, Ser-373, and Lys-394. Lys-343 functions as the Proton acceptor in the catalytic mechanism.

This sequence belongs to the enolase family. It depends on Mg(2+) as a cofactor.

Its subcellular location is the cytoplasm. The protein localises to the secreted. The protein resides in the cell surface. The enzyme catalyses (2R)-2-phosphoglycerate = phosphoenolpyruvate + H2O. The protein operates within carbohydrate degradation; glycolysis; pyruvate from D-glyceraldehyde 3-phosphate: step 4/5. Catalyzes the reversible conversion of 2-phosphoglycerate (2-PG) into phosphoenolpyruvate (PEP). It is essential for the degradation of carbohydrates via glycolysis. The sequence is that of Enolase from Leptospira interrogans serogroup Icterohaemorrhagiae serovar copenhageni (strain Fiocruz L1-130).